Here is a 300-residue protein sequence, read N- to C-terminus: Putative lysophosphatidic acid:oleoyl-CoA acyltransferase (300 aa).

The chain crosses the membrane as a helical span at residues 32–52 (WILIVVVMILRVPLCIISVTL). An HXXXXD motif motif is present at residues 115–120 (HSSPLD).

Belongs to the 1-acyl-sn-glycerol-3-phosphate acyltransferase family.

The protein resides in the lipid droplet. It localises to the endoplasmic reticulum membrane. Its subcellular location is the golgi apparatus membrane. It carries out the reaction a 1-acyl-sn-glycero-3-phosphate + an acyl-CoA = a 1,2-diacyl-sn-glycero-3-phosphate + CoA. In terms of biological role, acyl-CoA-dependent lysophosphatidic acid acyltransferase with preference for oleoyl-CoA. Involved in triacylglyceride homeostasis and lipid droplet formation. Involved in vacuolar protein sorting. This is Putative lysophosphatidic acid:oleoyl-CoA acyltransferase (vps66) from Schizosaccharomyces pombe (strain 972 / ATCC 24843) (Fission yeast).